A 902-amino-acid polypeptide reads, in one-letter code: HTH-type transcriptional regulator MalT (902 aa).

An ATP-binding site is contributed by 39–46 (SPAGYGKT). The region spanning 832–897 (ELVRTSPLTQ…EAIVTAENLL (66 aa)) is the HTH luxR-type domain. The segment at residues 856–875 (NEQIAQELDVAGTTIKTHIR) is a DNA-binding region (H-T-H motif).

Belongs to the MalT family. As to quaternary structure, monomer in solution. Oligomerizes to an active state in the presence of the positive effectors ATP and maltotriose.

With respect to regulation, activated by ATP and maltotriose, which are both required for DNA binding. Positively regulates the transcription of the maltose regulon whose gene products are responsible for uptake and catabolism of malto-oligosaccharides. Specifically binds to the promoter region of its target genes, recognizing a short DNA motif called the MalT box. This is HTH-type transcriptional regulator MalT from Vibrio campbellii (strain ATCC BAA-1116).